The chain runs to 709 residues: ATP-binding cassette sub-family F member 3 (709 aa).

An N-acetylalanine modification is found at alanine 2. Basic and acidic residues predominate over residues 129 to 143 (RLKAKQEKRSEKETL). The segment at 129–171 (RLKAKQEKRSEKETLKTSSPLVLEEASASQAGSRKESRLESSG) is disordered. 3 positions are modified to phosphoserine: serine 155, serine 157, and serine 161. Positions 161–171 (SRKESRLESSG) are enriched in basic and acidic residues. ABC transporter domains follow at residues 178–424 (VRIE…LNQQ) and 492–707 (LQLD…RREG). 210–217 (GRNGLGKT) lines the ATP pocket. At serine 283 the chain carries Phosphoserine. Residue 525-532 (GENGAGKS) participates in ATP binding.

Belongs to the ABC transporter superfamily. ABCF family. EF3 subfamily.

Displays an antiviral effect against flaviviruses such as west Nile virus (WNV) in the presence of OAS1B. This chain is ATP-binding cassette sub-family F member 3 (Abcf3), found in Rattus norvegicus (Rat).